Here is a 220-residue protein sequence, read N- to C-terminus: Large ribosomal subunit protein bL25 (220 aa).

Positions 186 to 199 (ELEDEDEDEDEVAA) are enriched in acidic residues. Residues 186–220 (ELEDEDEDEDEVAADEVPATEVDDQAAVKEGEGKE) are disordered. The segment covering 211-220 (AAVKEGEGKE) has biased composition (basic and acidic residues).

This sequence belongs to the bacterial ribosomal protein bL25 family. CTC subfamily. As to quaternary structure, part of the 50S ribosomal subunit; part of the 5S rRNA/L5/L18/L25 subcomplex. Contacts the 5S rRNA. Binds to the 5S rRNA independently of L5 and L18.

This is one of the proteins that binds to the 5S RNA in the ribosome where it forms part of the central protuberance. The chain is Large ribosomal subunit protein bL25 from Christiangramia forsetii (strain DSM 17595 / CGMCC 1.15422 / KT0803) (Gramella forsetii).